A 268-amino-acid polypeptide reads, in one-letter code: Tryptophan synthase alpha chain (268 aa).

Residues Glu-49 and Asp-60 each act as proton acceptor in the active site.

The protein belongs to the TrpA family. In terms of assembly, tetramer of two alpha and two beta chains.

It carries out the reaction (1S,2R)-1-C-(indol-3-yl)glycerol 3-phosphate + L-serine = D-glyceraldehyde 3-phosphate + L-tryptophan + H2O. Its pathway is amino-acid biosynthesis; L-tryptophan biosynthesis; L-tryptophan from chorismate: step 5/5. Functionally, the alpha subunit is responsible for the aldol cleavage of indoleglycerol phosphate to indole and glyceraldehyde 3-phosphate. The sequence is that of Tryptophan synthase alpha chain from Sodalis glossinidius (strain morsitans).